The following is a 272-amino-acid chain: Exosome complex component Rrp42 (272 aa).

This sequence belongs to the RNase PH family. Rrp42 subfamily. Component of the archaeal exosome complex. Forms a hexameric ring-like arrangement composed of 3 Rrp41-Rrp42 heterodimers. The hexameric ring associates with a trimer of Rrp4 and/or Csl4 subunits.

It localises to the cytoplasm. In terms of biological role, non-catalytic component of the exosome, which is a complex involved in RNA degradation. Contributes to the structuring of the Rrp41 active site. The polypeptide is Exosome complex component Rrp42 (Thermococcus kodakarensis (strain ATCC BAA-918 / JCM 12380 / KOD1) (Pyrococcus kodakaraensis (strain KOD1))).